Consider the following 1014-residue polypeptide: Regulator of telomere elongation helicase 1 homolog (1014 aa).

Positions 7–308 (RGVDVDFPYD…NSADKQFDPE (302 aa)) constitute a Helicase ATP-binding domain. Residue 42 to 49 (SPTGTGKT) participates in ATP binding. The segment covering 70–85 (GGGGGGGGGGGGGGGS) has biased composition (gly residues). The segment at 70-106 (GGGGGGGGGGGGGGGSQQPPYGSQPSGSQHSGGSASQ) is disordered. The span at 86-106 (QQPPYGSQPSGSQHSGGSASQ) shows a compositional bias: low complexity. [4Fe-4S] cluster is bound by residues Cys-149, Cys-170, Cys-175, and Cys-211. A DEAH box motif is present at residues 255-258 (DEAH). The interval 906–930 (SSKKSNITHAPGNSGAIHEKSGGQE) is disordered.

The protein belongs to the helicase family. RAD3/XPD subfamily.

The protein resides in the nucleus. It carries out the reaction ATP + H2O = ADP + phosphate + H(+). Functionally, a probable ATP-dependent DNA helicase implicated in DNA replication, DNA repair and the maintenance of genomic stability. Acts as an anti-recombinase to counteract toxic recombination and limit crossover during meiosis. Regulates meiotic recombination and crossover homeostasis by physically dissociating strand invasion events and thereby promotes noncrossover repair by meiotic synthesis dependent strand annealing (SDSA) as well as disassembly of D loop recombination intermediates. The protein is Regulator of telomere elongation helicase 1 homolog of Oryza sativa subsp. japonica (Rice).